We begin with the raw amino-acid sequence, 520 residues long: Ribonuclease Y (520 aa).

A helical membrane pass occupies residues 1–21; sequence MEILIIVIAAVVGLALGFAIA. Residues 210–295 form the KH domain; sequence CVSVFNLESD…EVVKKTRKQI (86 aa). An HD domain is found at 336–429; sequence LLQHSREVAK…VQVCDAISGA (94 aa).

This sequence belongs to the RNase Y family.

It localises to the cell membrane. Its function is as follows. Endoribonuclease that initiates mRNA decay. The chain is Ribonuclease Y from Christiangramia forsetii (strain DSM 17595 / CGMCC 1.15422 / KT0803) (Gramella forsetii).